A 269-amino-acid polypeptide reads, in one-letter code: Formamidopyrimidine-DNA glycosylase (269 aa).

Residue proline 2 is the Schiff-base intermediate with DNA of the active site. The Proton donor role is filled by glutamate 3. Lysine 57 acts as the Proton donor; for beta-elimination activity in catalysis. Residues histidine 90, arginine 109, and lysine 150 each contribute to the DNA site. The segment at 235–269 adopts an FPG-type zinc-finger fold; that stretch reads QVYGRGGEPCRVCGTPIQMAKHGQRSTFFCPACQH. Arginine 259 (proton donor; for delta-elimination activity) is an active-site residue.

Belongs to the FPG family. In terms of assembly, monomer. Requires Zn(2+) as cofactor.

It catalyses the reaction Hydrolysis of DNA containing ring-opened 7-methylguanine residues, releasing 2,6-diamino-4-hydroxy-5-(N-methyl)formamidopyrimidine.. The catalysed reaction is 2'-deoxyribonucleotide-(2'-deoxyribose 5'-phosphate)-2'-deoxyribonucleotide-DNA = a 3'-end 2'-deoxyribonucleotide-(2,3-dehydro-2,3-deoxyribose 5'-phosphate)-DNA + a 5'-end 5'-phospho-2'-deoxyribonucleoside-DNA + H(+). Functionally, involved in base excision repair of DNA damaged by oxidation or by mutagenic agents. Acts as a DNA glycosylase that recognizes and removes damaged bases. Has a preference for oxidized purines, such as 7,8-dihydro-8-oxoguanine (8-oxoG). Has AP (apurinic/apyrimidinic) lyase activity and introduces nicks in the DNA strand. Cleaves the DNA backbone by beta-delta elimination to generate a single-strand break at the site of the removed base with both 3'- and 5'-phosphates. The polypeptide is Formamidopyrimidine-DNA glycosylase (Sodalis glossinidius (strain morsitans)).